We begin with the raw amino-acid sequence, 122 residues long: MIQQESVVKVADNSGAKRALVIRVLGGTRRRYAGLGDRVIVAVKDALPNGTVKKSDVAKAVVVRTVKETRRKDGSYIRFDENAVVIINDNGEPKATRIFGPVARELREKRYMKIVSLAPEVL.

This sequence belongs to the universal ribosomal protein uL14 family. In terms of assembly, part of the 50S ribosomal subunit. Forms a cluster with proteins L3 and L19. In the 70S ribosome, L14 and L19 interact and together make contacts with the 16S rRNA in bridges B5 and B8.

Binds to 23S rRNA. Forms part of two intersubunit bridges in the 70S ribosome. The chain is Large ribosomal subunit protein uL14 from Gemmatimonas aurantiaca (strain DSM 14586 / JCM 11422 / NBRC 100505 / T-27).